The primary structure comprises 431 residues: Adenylosuccinate lyase (431 aa).

Residues 4-5 (RY), 67-69 (RHD), and 93-94 (TS) contribute to the N(6)-(1,2-dicarboxyethyl)-AMP site. His-141 serves as the catalytic Proton donor/acceptor. N(6)-(1,2-dicarboxyethyl)-AMP is bound at residue Gln-212. Catalysis depends on Ser-262, which acts as the Proton donor/acceptor. Residues Ser-263, 268–270 (KRN), Asn-276, and 307–311 (SAERI) each bind N(6)-(1,2-dicarboxyethyl)-AMP.

Belongs to the lyase 1 family. Adenylosuccinate lyase subfamily. As to quaternary structure, homotetramer. Residues from neighboring subunits contribute catalytic and substrate-binding residues to each active site.

The catalysed reaction is N(6)-(1,2-dicarboxyethyl)-AMP = fumarate + AMP. It catalyses the reaction (2S)-2-[5-amino-1-(5-phospho-beta-D-ribosyl)imidazole-4-carboxamido]succinate = 5-amino-1-(5-phospho-beta-D-ribosyl)imidazole-4-carboxamide + fumarate. It functions in the pathway purine metabolism; AMP biosynthesis via de novo pathway; AMP from IMP: step 2/2. The protein operates within purine metabolism; IMP biosynthesis via de novo pathway; 5-amino-1-(5-phospho-D-ribosyl)imidazole-4-carboxamide from 5-amino-1-(5-phospho-D-ribosyl)imidazole-4-carboxylate: step 2/2. Catalyzes two reactions in de novo purine nucleotide biosynthesis. Catalyzes the breakdown of 5-aminoimidazole- (N-succinylocarboxamide) ribotide (SAICAR or 2-[5-amino-1-(5-phospho-beta-D-ribosyl)imidazole-4-carboxamido]succinate) to 5-aminoimidazole-4-carboxamide ribotide (AICAR or 5-amino-1-(5-phospho-beta-D-ribosyl)imidazole-4-carboxamide) and fumarate, and of adenylosuccinate (ADS or N(6)-(1,2-dicarboxyethyl)-AMP) to adenosine monophosphate (AMP) and fumarate. Influences the affinity of glutamyl--tRNA ligase for its substrates and increases its thermostability. The polypeptide is Adenylosuccinate lyase (purB) (Bacillus subtilis (strain 168)).